A 188-amino-acid chain; its full sequence is Protein GrpE 2 (188 aa).

Residues M1–E29 are compositionally biased toward basic and acidic residues. The interval M1–Q33 is disordered.

Belongs to the GrpE family. As to quaternary structure, homodimer.

The protein localises to the cytoplasm. Participates actively in the response to hyperosmotic and heat shock by preventing the aggregation of stress-denatured proteins, in association with DnaK and GrpE. It is the nucleotide exchange factor for DnaK and may function as a thermosensor. Unfolded proteins bind initially to DnaJ; upon interaction with the DnaJ-bound protein, DnaK hydrolyzes its bound ATP, resulting in the formation of a stable complex. GrpE releases ADP from DnaK; ATP binding to DnaK triggers the release of the substrate protein, thus completing the reaction cycle. Several rounds of ATP-dependent interactions between DnaJ, DnaK and GrpE are required for fully efficient folding. In Buchnera aphidicola subsp. Schizaphis graminum (strain Sg), this protein is Protein GrpE 2.